Reading from the N-terminus, the 72-residue chain is MAKQDVIELEGTVLDTLPNAMFKVELENGHEILAHVSGKIRMNYIRILPGDKVTVEMSPYDLTRGRITYRYK.

The region spanning 1–72 (MAKQDVIELE…TRGRITYRYK (72 aa)) is the S1-like domain.

The protein belongs to the IF-1 family. In terms of assembly, component of the 30S ribosomal translation pre-initiation complex which assembles on the 30S ribosome in the order IF-2 and IF-3, IF-1 and N-formylmethionyl-tRNA(fMet); mRNA recruitment can occur at any time during PIC assembly.

The protein resides in the cytoplasm. Its function is as follows. One of the essential components for the initiation of protein synthesis. Stabilizes the binding of IF-2 and IF-3 on the 30S subunit to which N-formylmethionyl-tRNA(fMet) subsequently binds. Helps modulate mRNA selection, yielding the 30S pre-initiation complex (PIC). Upon addition of the 50S ribosomal subunit IF-1, IF-2 and IF-3 are released leaving the mature 70S translation initiation complex. This Staphylococcus aureus (strain USA300 / TCH1516) protein is Translation initiation factor IF-1.